Reading from the N-terminus, the 423-residue chain is Histidine--tRNA ligase (423 aa).

It belongs to the class-II aminoacyl-tRNA synthetase family. As to quaternary structure, homodimer.

The protein resides in the cytoplasm. The enzyme catalyses tRNA(His) + L-histidine + ATP = L-histidyl-tRNA(His) + AMP + diphosphate + H(+). In Laribacter hongkongensis (strain HLHK9), this protein is Histidine--tRNA ligase.